The primary structure comprises 50 residues: Thrombin-like enzyme BpirSP41 (50 aa).

In terms of domain architecture, Peptidase S1 spans 1-50 (VVGGDECDINEHPFLAFLYSHGYFCGLTLINQEWVLTAAHCDRRFMRIYL). The cysteines at positions 25 and 41 are disulfide-linked. His40 (charge relay system) is an active-site residue.

Belongs to the peptidase S1 family. Snake venom subfamily. In terms of assembly, monomer. Post-translationally, N-glycosylated. In terms of tissue distribution, expressed by the venom gland.

The protein localises to the secreted. With respect to regulation, inhibited by serine protease inhibitors PMSF, benzamidine, leupeptin and aprotinin, as well as by copper ions (Cu2+). Not inhibited by metalloprotease inhibitors EDTA, EGTA and 1,10-phenanthroline, as well as by barium (Ba2+) and calcium ion (Ca2+). Its function is as follows. Snake venom serine protease that interferes with the hemostatic system of the prey. It almost completely degrades both Aalpha (FGA) and Bbeta (FGB) chains of fibrinogen. It presents a higher ability to degrade fibrin clots than BpirSP27. It hydrolyzes chromogenic substrates S-2238 (used for testing thrombin activity), S-2222 (factor Xa), S-2266 (glandular kallikrein and factor XIa), and S-2302 (plasma kallikrein, factor XIa and XIIa). It shows a decrease in the clotting time of human plasma in the presence of increasing doses of the enzyme. Its minimum coagulant dose (MCD) is 20 ug. It promotes platelet aggregation with a maximum of aggregation of 20%, regardless of the concentration increase or the presence of calcium. It also shows 40% inhibition of the hemolytic activity promoted by the complement pathways and possess only a minor role in the induction of edema and pain in rat. This Bothrops pirajai (Piraja's lancehead) protein is Thrombin-like enzyme BpirSP41.